We begin with the raw amino-acid sequence, 375 residues long: Acetylornithine aminotransferase (375 aa).

Residues G93–T94 and F120 contribute to the pyridoxal 5'-phosphate site. R123 is a binding site for N(2)-acetyl-L-ornithine. D205–Q208 lines the pyridoxal 5'-phosphate pocket. K234 bears the N6-(pyridoxal phosphate)lysine mark. Residue T262 participates in N(2)-acetyl-L-ornithine binding. T263 contributes to the pyridoxal 5'-phosphate binding site.

Belongs to the class-III pyridoxal-phosphate-dependent aminotransferase family. ArgD subfamily. In terms of assembly, homodimer. The cofactor is pyridoxal 5'-phosphate.

It localises to the cytoplasm. It catalyses the reaction N(2)-acetyl-L-ornithine + 2-oxoglutarate = N-acetyl-L-glutamate 5-semialdehyde + L-glutamate. It functions in the pathway amino-acid biosynthesis; L-arginine biosynthesis; N(2)-acetyl-L-ornithine from L-glutamate: step 4/4. The protein is Acetylornithine aminotransferase of Staphylococcus epidermidis (strain ATCC 35984 / DSM 28319 / BCRC 17069 / CCUG 31568 / BM 3577 / RP62A).